Consider the following 470-residue polypeptide: Uronate isomerase (470 aa).

This sequence belongs to the metallo-dependent hydrolases superfamily. Uronate isomerase family.

It catalyses the reaction D-glucuronate = D-fructuronate. The catalysed reaction is aldehydo-D-galacturonate = keto-D-tagaturonate. The protein operates within carbohydrate metabolism; pentose and glucuronate interconversion. In Vibrio parahaemolyticus serotype O3:K6 (strain RIMD 2210633), this protein is Uronate isomerase.